A 316-amino-acid polypeptide reads, in one-letter code: tRNA dimethylallyltransferase (316 aa).

27 to 34 provides a ligand contact to ATP; sequence GATATGKT. Substrate is bound at residue 29-34; it reads TATGKT. An interaction with substrate tRNA region spans residues 52–55; that stretch reads DSRQ.

The protein belongs to the IPP transferase family. Monomer. Mg(2+) is required as a cofactor.

It carries out the reaction adenosine(37) in tRNA + dimethylallyl diphosphate = N(6)-dimethylallyladenosine(37) in tRNA + diphosphate. Its function is as follows. Catalyzes the transfer of a dimethylallyl group onto the adenine at position 37 in tRNAs that read codons beginning with uridine, leading to the formation of N6-(dimethylallyl)adenosine (i(6)A). This is tRNA dimethylallyltransferase from Treponema pallidum (strain Nichols).